Here is a 53-residue protein sequence, read N- to C-terminus: uncharacterized protein (53 aa).

A helical transmembrane segment spans residues 18–38 (FLFFIFYFLFFFIFFTVFGNL).

It localises to the membrane. This is an uncharacterized protein from Dictyostelium discoideum (Social amoeba).